Consider the following 307-residue polypeptide: Transcription factor bHLH127 (307 aa).

2 disordered regions span residues 41–68 (SDPL…LPHQ) and 101–155 (PHPQ…AEMH). Residues 110 to 119 (APPPPKPPSS) are compositionally biased toward pro residues. One can recognise a bHLH domain in the interval 150 to 199 (RAAEMHNLAERRRREKINERMKTLQQLIPRCNKSTKVSMLEDVIEYVKSL).

This sequence belongs to the bHLH protein family. In terms of assembly, homodimer.

It is found in the nucleus. The chain is Transcription factor bHLH127 (BHLH127) from Arabidopsis thaliana (Mouse-ear cress).